The primary structure comprises 746 residues: Protein psiN (746 aa).

A signal peptide spans 1 to 23; it reads MGNINKKLFYFLIQLITILIVLS. The Extracellular segment spans residues 24–679; it reads DDSYNSLLPL…KCQSAAVKAA (656 aa). N-linked (GlcNAc...) asparagine glycans are attached at residues N97 and N124. The PA14 domain occupies 125–276; it reads VTSDDPRIYS…YDYCGVCEGM (152 aa). 7 N-linked (GlcNAc...) asparagine glycosylation sites follow: N319, N353, N380, N477, N553, N628, and N654. Residues 680–700 traverse the membrane as a helical segment; sequence VGVGAGAAAGIAIGGAIALGL. At 701–746 the chain is on the cytoplasmic side; that stretch reads AAFGGKRGYDAWKSSRDNQIQTSSENPLYNPNPNQGDNPLYAANNS. The tract at residues 714-746 is disordered; that stretch reads SSRDNQIQTSSENPLYNPNPNQGDNPLYAANNS. Over residues 717–746 the composition is skewed to polar residues; that stretch reads DNQIQTSSENPLYNPNPNQGDNPLYAANNS.

This sequence belongs to the prespore-cell-inducing factor family.

It localises to the membrane. The protein is Protein psiN (psiN) of Dictyostelium discoideum (Social amoeba).